Reading from the N-terminus, the 496-residue chain is NAD(P)H-quinone oxidoreductase subunit 2 A, chloroplastic (496 aa).

14 helical membrane-spanning segments follow: residues 13–33, 41–61, 83–103, 110–130, 133–153, 168–188, 213–233, 245–265, 279–299, 307–327, 338–358, 380–400, 413–435, and 470–490; these read SILP…IDLL, TFWS…ILLL, IFRF…VDYI, VTEF…LCGA, LISI…LSGY, LLMG…PYGL, VSIA…LVPF, PTPV…ALAT, WHLP…LIAV, MLAY…IAGD, YMLI…SFGL, LSLV…GFFG, LYFL…SRII, and MILC…IIAI.

This sequence belongs to the complex I subunit 2 family. NDH is composed of at least 16 different subunits, 5 of which are encoded in the nucleus.

The protein resides in the plastid. It localises to the chloroplast thylakoid membrane. It carries out the reaction a plastoquinone + NADH + (n+1) H(+)(in) = a plastoquinol + NAD(+) + n H(+)(out). It catalyses the reaction a plastoquinone + NADPH + (n+1) H(+)(in) = a plastoquinol + NADP(+) + n H(+)(out). NDH shuttles electrons from NAD(P)H:plastoquinone, via FMN and iron-sulfur (Fe-S) centers, to quinones in the photosynthetic chain and possibly in a chloroplast respiratory chain. The immediate electron acceptor for the enzyme in this species is believed to be plastoquinone. Couples the redox reaction to proton translocation, and thus conserves the redox energy in a proton gradient. This chain is NAD(P)H-quinone oxidoreductase subunit 2 A, chloroplastic, found in Psilotum nudum (Whisk fern).